Reading from the N-terminus, the 279-residue chain is Elongation factor Ts (279 aa).

The involved in Mg(2+) ion dislocation from EF-Tu stretch occupies residues 79–82 (TDFV).

It belongs to the EF-Ts family.

It localises to the cytoplasm. Functionally, associates with the EF-Tu.GDP complex and induces the exchange of GDP to GTP. It remains bound to the aminoacyl-tRNA.EF-Tu.GTP complex up to the GTP hydrolysis stage on the ribosome. The polypeptide is Elongation factor Ts (Phytoplasma mali (strain AT)).